The sequence spans 397 residues: Ribosomal RNA large subunit methyltransferase I (397 aa).

The PUA domain occupies 2 to 81 (SAQVILQPSR…ESIDNGFFLR (80 aa)).

It belongs to the methyltransferase superfamily. RlmI family.

The protein resides in the cytoplasm. The enzyme catalyses cytidine(1962) in 23S rRNA + S-adenosyl-L-methionine = 5-methylcytidine(1962) in 23S rRNA + S-adenosyl-L-homocysteine + H(+). Specifically methylates the cytosine at position 1962 (m5C1962) of 23S rRNA. In Alteromonas mediterranea (strain DSM 17117 / CIP 110805 / LMG 28347 / Deep ecotype), this protein is Ribosomal RNA large subunit methyltransferase I.